Here is a 799-residue protein sequence, read N- to C-terminus: Ribosome-releasing factor 2, mitochondrial (799 aa).

Positions 19–306 (SKIRNIGIIA…AVVNYLPSPL (288 aa)) constitute a tr-type G domain. Residues 28-35 (AHIDAGKT), 93-97 (DTPGH), and 145-148 (NKMD) contribute to the GTP site.

It belongs to the TRAFAC class translation factor GTPase superfamily. Classic translation factor GTPase family. EF-G/EF-2 subfamily.

Its subcellular location is the mitochondrion. Its function is as follows. Mitochondrial GTPase that mediates the disassembly of ribosomes from messenger RNA at the termination of mitochondrial protein biosynthesis. Not involved in the GTP-dependent ribosomal translocation step during translation elongation. This Vanderwaltozyma polyspora (strain ATCC 22028 / DSM 70294 / BCRC 21397 / CBS 2163 / NBRC 10782 / NRRL Y-8283 / UCD 57-17) (Kluyveromyces polysporus) protein is Ribosome-releasing factor 2, mitochondrial.